The sequence spans 645 residues: Envelope glycoprotein (645 aa).

The N-terminal stretch at 1–36 (MEGPTHPKPFKDKTFSWDLIILVGVVRVLLRLDVGM) is a signal peptide. At 37 to 589 (ANPSPHQVYN…FNKSPWFTTL (553 aa)) the chain is on the extracellular side. Residues Asn46 and Asn61 are each glycosylated (N-linked (GlcNAc...) asparagine; by host). 2 disulfides stabilise this stretch: Cys128–Cys150 and Cys142–Cys155. Residues 238–283 (QAMGPNLVLPEQKPPSRQSQTKSKVATQKPQTNGTTPRSVAPATMS) are disordered. Residues 252 to 275 (PSRQSQTKSKVATQKPQTNGTTPR) show a composition bias toward polar residues. N-linked (GlcNAc...) asparagine; by host glycans are attached at residues Asn270, Asn305, and Asn310. Disulfide bonds link Cys315/Cys318, Cys315/Cys542, and Cys534/Cys541. Residues 315 to 318 (CWLC) carry the CXXC motif. 5 N-linked (GlcNAc...) asparagine; by host glycosylation sites follow: Asn334, Asn337, Asn377, Asn393, and Asn413. The segment at 451–471 (ISLTVALMLGGLTVGGIAAGV) is fusion peptide. Coiled coils occupy residues 479–528 (LETA…ILFL) and 538–574 (KEEC…SQQG). Positions 517-533 (LQNRRGLDILFLQGGGL) are immunosuppression. Residues 534 to 542 (CAALKEECC) carry the CX6CC motif. Residues 590–610 (ISSIMGPLLILLLILLFGPCI) form a helical membrane-spanning segment. Cys609 carries S-palmitoyl cysteine; by host lipidation. Residues 611–645 (LNRLVQFVKDRISVVQALILTQQYQQIQQYDPDRP) lie on the Cytoplasmic side of the membrane.

In terms of assembly, the mature envelope protein (Env) consists of a trimer of SU-TM heterodimers attached by a labile interchain disulfide bond. Post-translationally, specific enzymatic cleavages in vivo yield mature proteins. Envelope glycoproteins are synthesized as an inactive precursor that is N-glycosylated and processed likely by host cell furin or by a furin-like protease in the Golgi to yield the mature SU and TM proteins. The cleavage site between SU and TM requires the minimal sequence [KR]-X-[KR]-R. The R-peptide is released from the C-terminus of the cytoplasmic tail of the TM protein upon particle formation as a result of proteolytic cleavage by the viral protease. Cleavage of this peptide is required for TM to become fusogenic. The CXXC motif is highly conserved across a broad range of retroviral envelope proteins. It is thought to participate in the formation of a labile disulfide bond possibly with the CX6CC motif present in the transmembrane protein. Isomerization of the intersubunit disulfide bond to an SU intrachain disulfide bond is thought to occur upon receptor recognition in order to allow membrane fusion. In terms of processing, the transmembrane protein is palmitoylated. Post-translationally, the R-peptide is palmitoylated.

The protein localises to the virion membrane. Its subcellular location is the host cell membrane. Functionally, the surface protein (SU) attaches the virus to the host cell by binding to its receptor. This interaction triggers the refolding of the transmembrane protein (TM) and is thought to activate its fusogenic potential by unmasking its fusion peptide. Fusion occurs at the host cell plasma membrane. The transmembrane protein (TM) acts as a class I viral fusion protein. Under the current model, the protein has at least 3 conformational states: pre-fusion native state, pre-hairpin intermediate state, and post-fusion hairpin state. During viral and target cell membrane fusion, the coiled coil regions (heptad repeats) assume a trimer-of-hairpins structure, positioning the fusion peptide in close proximity to the C-terminal region of the ectodomain. The formation of this structure appears to drive apposition and subsequent fusion of viral and target cell membranes. Membranes fusion leads to delivery of the nucleocapsid into the cytoplasm. The protein is Envelope glycoprotein (env) of Feline sarcoma virus (strain SM) (Sm-FeSV).